The primary structure comprises 205 residues: Outer-membrane lipoprotein carrier protein (205 aa).

The signal sequence occupies residues 1-19 (MKKIIICFIFVFSINVSFA).

It belongs to the LolA family. As to quaternary structure, monomer.

Its subcellular location is the periplasm. Its function is as follows. Participates in the translocation of lipoproteins from the inner membrane to the outer membrane. Only forms a complex with a lipoprotein if the residue after the N-terminal Cys is not an aspartate (The Asp acts as a targeting signal to indicate that the lipoprotein should stay in the inner membrane). This is Outer-membrane lipoprotein carrier protein from Francisella tularensis subsp. tularensis (strain FSC 198).